The sequence spans 388 residues: Chalcone synthase D (388 aa).

Residue Cys164 is part of the active site.

The protein belongs to the thiolase-like superfamily. Chalcone/stilbene synthases family.

The enzyme catalyses (E)-4-coumaroyl-CoA + 3 malonyl-CoA + 3 H(+) = 2',4,4',6'-tetrahydroxychalcone + 3 CO2 + 4 CoA. It functions in the pathway secondary metabolite biosynthesis; flavonoid biosynthesis. The primary product of this enzyme is 4,2',4',6'-tetrahydroxychalcone (also termed naringenin-chalcone or chalcone) which can under specific conditions spontaneously isomerize into naringenin. The polypeptide is Chalcone synthase D (CHSD) (Ipomoea nil (Japanese morning glory)).